The sequence spans 330 residues: Methionyl-tRNA formyltransferase (330 aa).

Residue 112 to 115 (SLLP) coordinates (6S)-5,6,7,8-tetrahydrofolate.

The protein belongs to the Fmt family.

It catalyses the reaction L-methionyl-tRNA(fMet) + (6R)-10-formyltetrahydrofolate = N-formyl-L-methionyl-tRNA(fMet) + (6S)-5,6,7,8-tetrahydrofolate + H(+). Functionally, attaches a formyl group to the free amino group of methionyl-tRNA(fMet). The formyl group appears to play a dual role in the initiator identity of N-formylmethionyl-tRNA by promoting its recognition by IF2 and preventing the misappropriation of this tRNA by the elongation apparatus. This chain is Methionyl-tRNA formyltransferase, found in Synechococcus sp. (strain RCC307).